The primary structure comprises 354 residues: Major egg antigen (354 aa).

The tract at residues 1 to 21 is disordered; it reads MSGGKQHNAVSIPVNREQRSF. SHSP domains follow at residues 122-233 and 251-354; these read SVND…VAVR and AKGV…AITH.

Belongs to the small heat shock protein (HSP20) family.

This is Major egg antigen from Schistosoma mansoni (Blood fluke).